We begin with the raw amino-acid sequence, 74 residues long: Antimicrobial peptide 36.4 (74 aa).

The first 22 residues, 1 to 22 (MKVNVLLAVFLVVMVVTDHCHA), serve as a signal peptide directing secretion. Lysine 39 is subject to Lysine amide. Residues 44–74 (LQMEARFQPQNKNYRKRELDLENLFTHMPDY) constitute a propeptide that is removed on maturation.

It belongs to the non-disulfide-bridged peptide (NDBP) superfamily. Short antimicrobial peptide (group 4) family. As to expression, expressed by the venom gland.

It localises to the secreted. It is found in the target cell membrane. Functionally, cationic host defense peptide that have antibacterial activity by breaking membranes. Is more effective on Gram-positive than on Gram-negative bacteria. This chain is Antimicrobial peptide 36.4, found in Lychas mucronatus (Chinese swimming scorpion).